Reading from the N-terminus, the 603-residue chain is Palladin (603 aa).

The interval 63–67 (FPPPP) is interaction with VASP. Ser133 is subject to Phosphoserine. Residues 134-156 (PPTPAALLSPTKEPPPLLAKPKL) are disordered. Thr136 is modified (phosphothreonine). Ser142, Ser170, Ser256, and Ser261 each carry phosphoserine. Residues 278-362 (PFFEMKLKHY…MAANTQGRVS (85 aa)) form the Ig-like C2-type 1 domain. The tract at residues 373–402 (NQRGRSPRSPPGHPHARRPRSRSRDSGDEN) is disordered. Ser378, Ser381, and Ser393 each carry phosphoserine. Ser395 bears the Phosphoserine; by PKB/AKT1 mark. The residue at position 398 (Ser398) is a Phosphoserine. 2 consecutive Ig-like C2-type domains span residues 412 to 503 (PHFL…LVVA) and 511 to 601 (PVFI…ARLD). Interaction with EZR regions lie at residues 414–503 (FLQA…LVVA) and 513–603 (FIEK…LDVY). The cysteines at positions 433 and 485 are disulfide-linked.

This sequence belongs to the myotilin/palladin family. As to quaternary structure, interacts with EPS8. Interacts with LASP1. Interacts with VASP. Interacts with ACTN. Interacts with SORBS2. Interacts with PFN1. Interacts with LPP. Interacts with SPIN90. Interacts with SRC. Interacts with EZR. Interacts with RAI14. In terms of processing, phosphorylated predominantly on serines and, to a lesser extent, on tyrosines. Phosphorylation at Ser-395 by PKB/AKT1 modulates cytoskeletal organization and cell motility. In terms of tissue distribution, in adult central nervous system is detected in the brain and spinal cord, specially in the olfactory bulb, cerebral and cerebellar cortices, hippocampus, amygdala, superior colluculus, and superficial laminae of the spinal dorsal horn.

Its subcellular location is the cytoplasm. The protein localises to the cytoskeleton. It localises to the cell junction. It is found in the focal adhesion. The protein resides in the myofibril. Its subcellular location is the sarcomere. The protein localises to the z line. It localises to the cell projection. It is found in the ruffle. The protein resides in the podosome. Its subcellular location is the lamellipodium. The protein localises to the axon. It localises to the growth cone. In terms of biological role, cytoskeletal protein required for organization of normal actin cytoskeleton. Roles in establishing cell morphology, motility, cell adhesion and cell-extracellular matrix interactions in a variety of cell types. May function as a scaffolding molecule with the potential to influence both actin polymerization and the assembly of existing actin filaments into higher-order arrays. Binds to proteins that bind to either monomeric or filamentous actin. Localizes at sites where active actin remodeling takes place, such as lamellipodia and membrane ruffles. Different isoforms may have functional differences. Plays a role in neurite outgrowth and in the establishment of polarity during neuronal morphogenesis. Participates in the acquisition of the reactive astrocyte morphology. This chain is Palladin (Palld), found in Rattus norvegicus (Rat).